Reading from the N-terminus, the 311-residue chain is Pyrimidine-specific ribonucleoside hydrolase RihA (311 aa).

The active site involves His-240.

It belongs to the IUNH family. RihA subfamily.

Its function is as follows. Hydrolyzes cytidine or uridine to ribose and cytosine or uracil, respectively. This chain is Pyrimidine-specific ribonucleoside hydrolase RihA, found in Salmonella enteritidis PT4 (strain P125109).